A 920-amino-acid chain; its full sequence is Isoleucine--tRNA ligase (920 aa).

A 'HIGH' region motif is present at residues 58-68 (PYANGHLHLGH). Residue glutamate 569 participates in L-isoleucyl-5'-AMP binding. The short motif at 610-614 (KMSKS) is the 'KMSKS' region element. ATP is bound at residue lysine 613. 4 residues coordinate Zn(2+): cysteine 895, cysteine 898, cysteine 910, and cysteine 913.

It belongs to the class-I aminoacyl-tRNA synthetase family. IleS type 1 subfamily. In terms of assembly, monomer. Zn(2+) serves as cofactor.

The protein localises to the cytoplasm. It catalyses the reaction tRNA(Ile) + L-isoleucine + ATP = L-isoleucyl-tRNA(Ile) + AMP + diphosphate. Functionally, catalyzes the attachment of isoleucine to tRNA(Ile). As IleRS can inadvertently accommodate and process structurally similar amino acids such as valine, to avoid such errors it has two additional distinct tRNA(Ile)-dependent editing activities. One activity is designated as 'pretransfer' editing and involves the hydrolysis of activated Val-AMP. The other activity is designated 'posttransfer' editing and involves deacylation of mischarged Val-tRNA(Ile). This chain is Isoleucine--tRNA ligase, found in Helicobacter pylori (strain P12).